A 291-amino-acid polypeptide reads, in one-letter code: N-acetylmannosamine kinase (291 aa).

ATP is bound by residues A5–K12 and G132–V139. Residues H156, C166, C168, and C173 each contribute to the Zn(2+) site.

The protein belongs to the ROK (NagC/XylR) family. NanK subfamily. In terms of assembly, homodimer.

The enzyme catalyses an N-acyl-D-mannosamine + ATP = an N-acyl-D-mannosamine 6-phosphate + ADP + H(+). Its pathway is amino-sugar metabolism; N-acetylneuraminate degradation; D-fructose 6-phosphate from N-acetylneuraminate: step 2/5. Functionally, catalyzes the phosphorylation of N-acetylmannosamine (ManNAc) to ManNAc-6-P. The chain is N-acetylmannosamine kinase (nanK2) from Escherichia coli O6:H1 (strain CFT073 / ATCC 700928 / UPEC).